Consider the following 794-residue polypeptide: MADNYVIWFENLRMTDVERVGGKNASLGEMISQLTEKGVRVPGGFATTAEAYRAFLAHNGLSERISAALAKLDVEDVAELARVGKEIRQWILDTPFPEQLDAEIEAAWNKMVADAGGADISVAVRSSATAEDLPDASFAGQQETFLNINGLDNVKEAMHHVFASLYNDRAISYRVHKGFEHDIVALSAGVQRMVRSDSGASGVMFTLDTESGYDQVVFVTSSYGLGENVVQGAVNPDEFYVFKPTLKAGKPAILRKTMGSKHIKMIFTDKAEAGKSVTNVDVPEEDRNRFSITDEEITELAHYALTIEKHYGRPMDIEWGRDGLDGKLYILQARPETVKSQEEGNRNLRRFAINGDKTVLCEGRAIGQKVGQGKVRLIKDASEMDSVEAGDVLVTDMTDPDWEPVMKRASAIVTNRGGRTCHAAIIARELGIPAVVGCGNATELLKNGQEVTVSCAEGDTGFIYAGLLDVQITDVALDNMPKAPVKVMMNVGNPELAFSFANLPSEGIGLARMEFIINRQIGIHPKALLEFDKQDDELKAEITRRIAGYASPVDFYVDKIAEGVATLAASVYPRKTIVRMSDFKSNEYANLVGGNVYEPHEENPMLGFRGAARYVADNFKDCFALECKALKRVRDEMGLTNVEIMIPFVRTLGEAEAVVKALKENGLERGKNGLRLIMMCELPSNAVLAEQFLQYFDGFSIGSNDMTQLTLGLDRDSGLVSESFDERNPAVKVMLHLAISACRKQNKYVGICGQGPSDHPDFAKWLVEEGIESVSLNPDTVIETWLYLANELNK.

The active-site Tele-phosphohistidine intermediate is histidine 422. Residues arginine 512, arginine 579, glutamate 681, glycine 702, serine 703, asparagine 704, and aspartate 705 each coordinate substrate. Position 681 (glutamate 681) interacts with Mg(2+). Aspartate 705 provides a ligand contact to Mg(2+). The active-site Proton donor is the cysteine 752.

The protein belongs to the PEP-utilizing enzyme family. The cofactor is Mg(2+).

The catalysed reaction is pyruvate + ATP + H2O = phosphoenolpyruvate + AMP + phosphate + 2 H(+). It participates in carbohydrate biosynthesis; gluconeogenesis. Catalyzes the phosphorylation of pyruvate to phosphoenolpyruvate. This chain is Phosphoenolpyruvate synthase (ppsA), found in Neisseria meningitidis serogroup B (strain ATCC BAA-335 / MC58).